Reading from the N-terminus, the 1087-residue chain is Formin-H (1087 aa).

Over residues 1-23 the composition is skewed to polar residues; sequence MSFDLESNSSGGSTIGRNSSIRL. The segment at 1 to 25 is disordered; that stretch reads MSFDLESNSSGGSTIGRNSSIRLSS. Residues 34-394 form the GBD/FH3 domain; the sequence is VSLNEIIDLD…QLEDELKIHP (361 aa). Low complexity-rich tracts occupy residues 416-436 and 549-558; these read FGFG…SMAK and SPGSTLSPSP. 3 disordered regions span residues 416–445, 549–625, and 1048–1087; these read FGFG…DNEE, SPGS…PAKP, and VDSL…QLKK. Positions 433–461 form a coiled coil; sequence SMAKTELKKDNEEKQKTIEHLLKQLNKFS. A compositionally biased stretch (polar residues) spans 569-588; the sequence is FGITSSSIHTSTDKLTNSTE. Residues 589–615 form the FH1 domain; it reads PILGSPPPPPPPPMSGGGGPPPPPPPP. A compositionally biased stretch (pro residues) spans 592 to 616; the sequence is GSPPPPPPPPMSGGGGPPPPPPPPG. An FH2 domain is found at 623–1016; sequence AKPIIKPSVK…ENSKMEDPEK (394 aa). The DAD domain occupies 1013-1051; the sequence is DPEKGGLQDLSSQIRSGQLFKDRRVGDSVIAQMQNVDSL.

The protein belongs to the formin homology family. Diaphanous subfamily. Interacts with vasP, proB/profilin-2 and rac1A. Interacts (via GBD/FH3 domain) with activated Rho-GTPases.

It localises to the cytoplasm. It is found in the cell cortex. Its subcellular location is the cytoskeleton. In terms of biological role, formins play an important role in the nucleation of actin and the formation of linear actin filaments. Important for cell migration and formation, elongation and maintenance of filopodia. Specifically controls filopodial dynamics by regulating actin turnover at the barbed ends of actin filaments. This chain is Formin-H (forH), found in Dictyostelium discoideum (Social amoeba).